The chain runs to 307 residues: tRNA dimethylallyltransferase 1 (307 aa).

11–18 (GPTASGKT) lines the ATP pocket. 13-18 (TASGKT) contacts substrate. Interaction with substrate tRNA stretches follow at residues 36-39 (DSRQ) and 159-163 (QRAIR).

Belongs to the IPP transferase family. In terms of assembly, monomer. The cofactor is Mg(2+).

The catalysed reaction is adenosine(37) in tRNA + dimethylallyl diphosphate = N(6)-dimethylallyladenosine(37) in tRNA + diphosphate. In terms of biological role, catalyzes the transfer of a dimethylallyl group onto the adenine at position 37 in tRNAs that read codons beginning with uridine, leading to the formation of N6-(dimethylallyl)adenosine (i(6)A). In Parabacteroides distasonis (strain ATCC 8503 / DSM 20701 / CIP 104284 / JCM 5825 / NCTC 11152), this protein is tRNA dimethylallyltransferase 1.